We begin with the raw amino-acid sequence, 473 residues long: Mogroside IIIx synthase (473 aa).

His-43 (proton acceptor) is an active-site residue. Asp-142 functions as the Charge relay in the catalytic mechanism. The UDP-alpha-D-glucose site is built by Ser-293, Gln-356, Trp-374, Asn-375, Ser-376, Glu-379, Asp-395, and Gln-396.

It belongs to the UDP-glycosyltransferase family. Highly expressed in mature fruits.

The enzyme catalyses mogroside IIE + UDP-alpha-D-glucose = mogroside IIIX + UDP + H(+). The catalysed reaction is mogroside III + UDP-alpha-D-glucose = mogroside IV + UDP + H(+). It carries out the reaction mogroside III + UDP-alpha-D-glucose = siamenoside I + UDP + H(+). It catalyses the reaction mogroside IIIX + UDP-alpha-D-glucose = mogroside IVA + UDP + H(+). The enzyme catalyses mogroside IIIX + UDP-alpha-D-glucose = siamenoside I + UDP + H(+). The catalysed reaction is mogroside IV + UDP-alpha-D-glucose = mogroside V + UDP + H(+). It carries out the reaction siamenoside I + UDP-alpha-D-glucose = mogroside V + UDP + H(+). It catalyses the reaction mogroside V + UDP-alpha-D-glucose = mogroside VI + UDP + H(+). It functions in the pathway secondary metabolite biosynthesis; terpenoid biosynthesis. Its activity is regulated as follows. Activity is increased by Mg(2+). UDP-glycosyltransferase involved in the biosynthesis of cucurbitacin and mogroside tetracyclic triterpene natural products (e.g. siamenoside I and mogrosides IV, V and VI). Cucurbitacins have cytotoxic properties and exhibit deterrent taste as a defense barrier against herbivores. Mogrosides are nonsugar highly oxygenated compounds used as high-intensity zero-calorie sweeteners; they also possess pharmacological properties such as regulating immunity, lowering blood sugar and lipid levels, protecting the liver, and acting as antioxidants and antitumor agents. In terms of biological role, catalyzes the branched glucosylations of mogroside II-E, mogroside III, mogroside IIIx, mogroside IV, mogroside IV-A, siamenoside I and mogroside V, ending in the production of mogroside VI. Functionally, catalyzes the beta(1-6) branched glucosylations of mogroside II-E to produce mogroside IIIx by forming a beta(1-6) glycosidic bond with the 6-hydroxyl of glucose 1-C24; a subsequent glycosylation at glucose 1-C3 leads to the formation of mogroside IV-A with beta(1-6) glycosidic bond. Can also use mogroside III-E, mogroside III-A, mogroside IV-E and mogroside IV-A as substrates. The protein is Mogroside IIIx synthase of Siraitia grosvenorii (Monk's fruit).